Here is a 567-residue protein sequence, read N- to C-terminus: Low-affinity glucose transporter (567 aa).

A compositionally biased stretch (polar residues) spans 1–24 (MSNQMTDSTSAGSGTEHSVDTNTA). Residues 1 to 36 (MSNQMTDSTSAGSGTEHSVDTNTALKAGSPNDLKVS) form a disordered region. Over 18–62 (SVDTNTALKAGSPNDLKVSHEEDLNDLEKTAEETLQQKPAKEYIF) the chain is Cytoplasmic. A helical membrane pass occupies residues 63-83 (VSLCCVMVAFGGFVFGWDTGT). Residues 84–113 (ISGFVNQTDFLRRFGQEKADGSHYLSNVRT) are Extracellular-facing. An N-linked (GlcNAc...) asparagine glycan is attached at asparagine 89. A helical transmembrane segment spans residues 114–134 (GLIVSIFNIGCAVGGIVLSNI). Residues 135-141 (GDRWGRR) are Cytoplasmic-facing. The helical transmembrane segment at 142-162 (IGLITVIIIYVIGIIIQIASV) threads the bilayer. The Extracellular portion of the chain corresponds to 163–167 (DKWYQ). A helical transmembrane segment spans residues 168–188 (YFIGRIISGLGVGGITVLSPM). The Cytoplasmic segment spans residues 189–199 (LISETAPKHLR). A helical membrane pass occupies residues 200–220 (GTLVSCYQLMITFGIFLGYCT). The Extracellular portion of the chain corresponds to 221–234 (NYGTKNYSNSVQWR). The chain crosses the membrane as a helical span at residues 235–255 (VPLGLCFAWAIFMVLGMMFVP). Over 256–334 (ESARFLVETD…MGIMIQSLQQ (79 aa)) the chain is Cytoplasmic. A helical transmembrane segment spans residues 335-354 (LTGDNYFFYYGTTIFQSVGM). The Extracellular segment spans residues 355 to 358 (DDSF). A helical transmembrane segment spans residues 359 to 379 (ETSIVLGIVNFASTFFALYTV). Residues 380–386 (DHFGRRN) are Cytoplasmic-facing. The helical transmembrane segment at 387 to 407 (CLLYGCVGMVACYVVYASVGV) threads the bilayer. Topologically, residues 408–429 (TRLWPDGPDHPDISSKGAGNCM) are extracellular. Residues 430 to 450 (IVFACFYIFCFATTWAPIAYV) form a helical membrane-spanning segment. At 451-466 (VISESYPLRVKGKAMA) the chain is on the cytoplasmic side. A helical membrane pass occupies residues 467–487 (IASASNWIWGFLIGFFTPFIT). At 488–493 (SAIHFY) the chain is on the extracellular side. The chain crosses the membrane as a helical span at residues 494–514 (YGYVFMGCMVFAFFYVYFFVP). Topologically, residues 515-567 (ETKGLTLEEVNEMYSEGVLPWKSSSWVPSSRRGAEYDVDALQHDDKPWYKAML) are cytoplasmic.

It belongs to the major facilitator superfamily. Sugar transporter (TC 2.A.1.1) family.

The protein localises to the membrane. Low-affinity glucose transporter. This chain is Low-affinity glucose transporter (RAG1), found in Kluyveromyces lactis (strain ATCC 8585 / CBS 2359 / DSM 70799 / NBRC 1267 / NRRL Y-1140 / WM37) (Yeast).